The sequence spans 339 residues: Protein RETICULATA-RELATED 2, chloroplastic (339 aa).

The N-terminal 58 residues, 1–58, are a transit peptide targeting the chloroplast; sequence MAAMAAKLHISTKSDQSNVRLPRLINLSRDPTARVLFPRNGSVSSLHTNFSSPNIMVP. Gly residues predominate over residues 68–86; sequence IGNHGGGSGSGGGGGGYGG. The disordered stretch occupies residues 68–92; sequence IGNHGGGSGSGGGGGGYGGSEEEES. The next 2 helical transmembrane spans lie at 148–168 and 213–233; these read FVFS…YLLA and VFAT…NGLI.

It belongs to the RETICULATA family.

It localises to the plastid. The protein localises to the chloroplast membrane. Its function is as follows. May play a role in leaf development. This Arabidopsis thaliana (Mouse-ear cress) protein is Protein RETICULATA-RELATED 2, chloroplastic.